We begin with the raw amino-acid sequence, 261 residues long: (S)-ureidoglycine aminohydrolase (261 aa).

Residues 184–230 enclose the Cupin type-2 domain; the sequence is LSFAPGASHGYIETHVQEHGAYILSGQGVYNLDNNWIPVKKGDYIFM. Residues glutamate 196, histidine 198, histidine 202, and glutamine 236 each coordinate Mn(2+). Glutamate 196 contributes to the substrate binding site. Residues glutamine 236, tyrosine 249, and lysine 253 each coordinate substrate.

The protein belongs to the UGHY family. Monomer. Mn(2+) is required as a cofactor.

The protein localises to the cytoplasm. It catalyses the reaction (S)-2-ureidoglycine + H2O = (S)-ureidoglycolate + NH4(+). Its function is as follows. Involved in the anaerobic nitrogen utilization via the assimilation of allantoin. Catalyzes the second stereospecific hydrolysis reaction (deamination) of the allantoin degradation pathway, producing S-ureidoglycolate and ammonia from S-ureidoglycine. The protein is (S)-ureidoglycine aminohydrolase (allE) of Escherichia coli (strain K12).